A 320-amino-acid polypeptide reads, in one-letter code: Adhesin MafA 1 (320 aa).

The first 18 residues, 1–18 (MQARLLIPILFSVFILSA), serve as a signal peptide directing secretion. Cys19 carries the N-palmitoyl cysteine lipid modification. Residue Cys19 is the site of S-diacylglycerol cysteine attachment. Positions 288 to 320 (HMGNSAPSVEADNSHEGYGYSDEAVRRHRQGQP) are disordered.

Belongs to the MafA family.

The protein localises to the cell outer membrane. This is Adhesin MafA 1 (mafA1) from Neisseria meningitidis serogroup A / serotype 4A (strain DSM 15465 / Z2491).